A 150-amino-acid polypeptide reads, in one-letter code: Catabolic 3-dehydroquinase (150 aa).

Tyrosine 24 acts as the Proton acceptor in catalysis. Positions 75, 81, and 88 each coordinate substrate. Histidine 101 acts as the Proton donor in catalysis. Substrate contacts are provided by residues valine 102–serine 103 and arginine 112.

Belongs to the type-II 3-dehydroquinase family. In terms of assembly, homododecamer. Adopts a ring-like structure, composed of an arrangement of two hexameric rings stacked on top of one another.

The enzyme catalyses 3-dehydroquinate = 3-dehydroshikimate + H2O. It participates in aromatic compound metabolism; 3,4-dihydroxybenzoate biosynthesis; 3,4-dihydroxybenzoate from 3-dehydroquinate: step 1/2. Functionally, is involved in the catabolism of quinate. Allows the utilization of quinate as carbon source via the beta-ketoadipate pathway. In Aspergillus clavatus (strain ATCC 1007 / CBS 513.65 / DSM 816 / NCTC 3887 / NRRL 1 / QM 1276 / 107), this protein is Catabolic 3-dehydroquinase.